The sequence spans 228 residues: LHFPL tetraspan subfamily member 2 protein (228 aa).

4 helical membrane passes run 11–31 (MLWTLLSIVVAFAELIAFMSA), 102–122 (IFLAVGIFILCMVALVSVFTM), 132–152 (IFNVCGLLQGIAGLFLILGLI), and 181–201 (LGWAFYTAIGGTVLTFICAVF).

The protein belongs to the LHFP family. In terms of tissue distribution, expressed in all tissues and cell lines examined except brain and peripheral blood leukocytes.

It localises to the membrane. Plays a role in female and male fertility. Involved in distal reproductive tract development. The protein is LHFPL tetraspan subfamily member 2 protein of Homo sapiens (Human).